A 314-amino-acid polypeptide reads, in one-letter code: Olfactory receptor 2W3 (314 aa).

Over 1 to 25 the chain is Extracellular; it reads MDGTNGSTQTHFILLGFSDRPHLER. An N-linked (GlcNAc...) asparagine glycan is attached at Asn5. The chain crosses the membrane as a helical span at residues 26–49; sequence ILFVVILIAYLLTLVGNTTIILVS. The Cytoplasmic portion of the chain corresponds to 50–57; it reads RLDPHLHT. Residues 58 to 79 form a helical membrane-spanning segment; it reads PMYFFLAHLSFLDLSFTTSSIP. Topologically, residues 80-100 are extracellular; it reads QLLYNLNGCDKTISYMGCAIQ. Residues 101–120 form a helical membrane-spanning segment; it reads LFLFLGLGGVECLLLAVMAY. Residues 121-139 are Cytoplasmic-facing; it reads DRCVAICKPLHYMVIMNPR. Residues 140–158 traverse the membrane as a helical segment; sequence LCRGLVSVTWGCGVANSLA. Residues 159–195 are Extracellular-facing; sequence MSPVTLRLPRCGHHEVDHFLREMPALIRMACVSTVAI. A helical transmembrane segment spans residues 196-219; that stretch reads EGTVFVLAVGVVLSPLVFILLSYS. Over 220–236 the chain is Cytoplasmic; the sequence is YIVRAVLQIRSASGRQK. A helical membrane pass occupies residues 237-259; the sequence is AFGTCGSHLTVVSLFYGNIIYMY. Topologically, residues 260–272 are extracellular; it reads MQPGASSSQDQGM. The helical transmembrane segment at 273–292 threads the bilayer; the sequence is FLMLFYNIVTPLLNPLIYTL. Topologically, residues 293–314 are cytoplasmic; sequence RNREVKGALGRLLLGKRELGKE.

Belongs to the G-protein coupled receptor 1 family.

Its subcellular location is the cell membrane. In terms of biological role, odorant receptor. The chain is Olfactory receptor 2W3 (OR2W3) from Homo sapiens (Human).